An 89-amino-acid polypeptide reads, in one-letter code: Small ribosomal subunit protein uS15 (89 aa).

This sequence belongs to the universal ribosomal protein uS15 family. In terms of assembly, part of the 30S ribosomal subunit. Forms a bridge to the 50S subunit in the 70S ribosome, contacting the 23S rRNA.

Functionally, one of the primary rRNA binding proteins, it binds directly to 16S rRNA where it helps nucleate assembly of the platform of the 30S subunit by binding and bridging several RNA helices of the 16S rRNA. In terms of biological role, forms an intersubunit bridge (bridge B4) with the 23S rRNA of the 50S subunit in the ribosome. This is Small ribosomal subunit protein uS15 from Methylocella silvestris (strain DSM 15510 / CIP 108128 / LMG 27833 / NCIMB 13906 / BL2).